The primary structure comprises 203 residues: Orotate phosphoribosyltransferase (203 aa).

5-phospho-alpha-D-ribose 1-diphosphate contacts are provided by residues Arg94, Lys98, His100, and 120–128 (EDLISTGGS). Orotate is bound at residue Ser124.

Belongs to the purine/pyrimidine phosphoribosyltransferase family. PyrE subfamily. As to quaternary structure, homodimer. Mg(2+) serves as cofactor.

It catalyses the reaction orotidine 5'-phosphate + diphosphate = orotate + 5-phospho-alpha-D-ribose 1-diphosphate. The protein operates within pyrimidine metabolism; UMP biosynthesis via de novo pathway; UMP from orotate: step 1/2. Functionally, catalyzes the transfer of a ribosyl phosphate group from 5-phosphoribose 1-diphosphate to orotate, leading to the formation of orotidine monophosphate (OMP). This Staphylococcus saprophyticus subsp. saprophyticus (strain ATCC 15305 / DSM 20229 / NCIMB 8711 / NCTC 7292 / S-41) protein is Orotate phosphoribosyltransferase.